A 278-amino-acid polypeptide reads, in one-letter code: Elongation factor Ts (278 aa).

An involved in Mg(2+) ion dislocation from EF-Tu region spans residues 82-85 (TDFV).

It belongs to the EF-Ts family.

The protein localises to the cytoplasm. Its function is as follows. Associates with the EF-Tu.GDP complex and induces the exchange of GDP to GTP. It remains bound to the aminoacyl-tRNA.EF-Tu.GTP complex up to the GTP hydrolysis stage on the ribosome. The polypeptide is Elongation factor Ts (tsf) (Streptomyces coelicolor (strain ATCC BAA-471 / A3(2) / M145)).